The chain runs to 186 residues: Phosphopantetheine adenylyltransferase (186 aa).

Thr14 provides a ligand contact to substrate. Residues 14–15 (TF) and His22 contribute to the ATP site. 3 residues coordinate substrate: Lys46, Leu78, and Arg92. ATP contacts are provided by residues 93-95 (GLR), Glu103, and 128-134 (WLYISST).

This sequence belongs to the bacterial CoaD family. In terms of assembly, homohexamer. It depends on Mg(2+) as a cofactor.

The protein resides in the cytoplasm. The catalysed reaction is (R)-4'-phosphopantetheine + ATP + H(+) = 3'-dephospho-CoA + diphosphate. It participates in cofactor biosynthesis; coenzyme A biosynthesis; CoA from (R)-pantothenate: step 4/5. Its function is as follows. Reversibly transfers an adenylyl group from ATP to 4'-phosphopantetheine, yielding dephospho-CoA (dPCoA) and pyrophosphate. This Nitratidesulfovibrio vulgaris (strain ATCC 29579 / DSM 644 / CCUG 34227 / NCIMB 8303 / VKM B-1760 / Hildenborough) (Desulfovibrio vulgaris) protein is Phosphopantetheine adenylyltransferase.